A 421-amino-acid chain; its full sequence is MDAEAARSYSLEQVQALYSFPFQQMMAEVPNMAVTTGQQVPAVAPNMATVTEQQVPEDAPVQEPAPEAPKRRKRKPRAAEPQEPVEPKKPATSKKSGKSTKSKEKQEKITDAFKVKRKVDRFNGVSEAELLTKTLPDILTFNLDIVIIGINPGLMAAYKGHHYPGPGNHFWKCLFMSGLSEVQLNHMDDHTLPGKYGIGFTNMVERTTPGSKDLSSKEFREGGRILVQKLQKYQPRIAVFNGKCIYEIFSKEVFGVKVKNLEFGLQPHKIPDTETLCYVMPSSSARCAQFPRAQDKVHYYIKLKDLRDQLKGIERNADVQEVQYTFDLQLAQEDAKKMAVKEEKYDPGYEAAYGGAYGENPCNGEPCGIASNGLTAHSAEPRGEAAPSDVPNGQWMAQSFAEQIPSFNNCGTREQEEESHA.

The interval 45-108 is disordered; it reads PNMATVTEQQ…STKSKEKQEK (64 aa). Positions 77–89 are enriched in basic and acidic residues; the sequence is RAAEPQEPVEPKK. Residues 91-100 are compositionally biased toward basic residues; it reads ATSKKSGKST. Glycyl lysine isopeptide (Lys-Gly) (interchain with G-Cter in SUMO2) cross-links involve residues lysine 114 and lysine 259. A Glycyl lysine isopeptide (Lys-Gly) (interchain with G-Cter in SUMO); alternate cross-link involves residue lysine 341. A Glycyl lysine isopeptide (Lys-Gly) (interchain with G-Cter in SUMO2); alternate cross-link involves residue lysine 341.

It belongs to the uracil-DNA glycosylase (UDG) superfamily. TDG/mug family. In terms of assembly, homodimer. Interacts with AICDA and GADD45A. Post-translationally, sumoylation on Lys-341 by either SUMO1 or SUMO2 induces dissociation of the product DNA.

The protein localises to the nucleus. The enzyme catalyses Hydrolyzes mismatched double-stranded DNA and polynucleotides, releasing free thymine.. Functionally, DNA glycosylase that plays a key role in active DNA demethylation: specifically recognizes and binds 5-formylcytosine (5fC) and 5-carboxylcytosine (5caC) in the context of CpG sites and mediates their excision through base-excision repair (BER) to install an unmethylated cytosine. Cannot remove 5-hydroxymethylcytosine (5hmC). According to an alternative model, involved in DNA demethylation by mediating DNA glycolase activity toward 5-hydroxymethyluracil (5hmU) produced by deamination of 5hmC. Also involved in DNA repair by acting as a thymine-DNA glycosylase that mediates correction of G/T mispairs to G/C pairs: in the DNA of higher eukaryotes, hydrolytic deamination of 5-methylcytosine to thymine leads to the formation of G/T mismatches. Its role in the repair of canonical base damage is however minor compared to its role in DNA demethylation. It is capable of hydrolyzing the carbon-nitrogen bond between the sugar-phosphate backbone of the DNA and a mispaired thymine. In addition to the G/T, it can remove thymine also from C/T and T/T mispairs in the order G/T &gt;&gt; C/T &gt; T/T. It has no detectable activity on apyrimidinic sites and does not catalyze the removal of thymine from A/T pairs or from single-stranded DNA. It can also remove uracil and 5-bromouracil from mispairs with guanine. This is G/T mismatch-specific thymine DNA glycosylase (Tdg) from Mus musculus (Mouse).